We begin with the raw amino-acid sequence, 173 residues long: Adenine phosphoribosyltransferase (173 aa).

Belongs to the purine/pyrimidine phosphoribosyltransferase family. In terms of assembly, homodimer.

Its subcellular location is the cytoplasm. It carries out the reaction AMP + diphosphate = 5-phospho-alpha-D-ribose 1-diphosphate + adenine. Its pathway is purine metabolism; AMP biosynthesis via salvage pathway; AMP from adenine: step 1/1. Functionally, catalyzes a salvage reaction resulting in the formation of AMP, that is energically less costly than de novo synthesis. This chain is Adenine phosphoribosyltransferase, found in Thermotoga maritima (strain ATCC 43589 / DSM 3109 / JCM 10099 / NBRC 100826 / MSB8).